The sequence spans 155 residues: Endoribonuclease YbeY (155 aa).

Residues H114, H118, and H124 each coordinate Zn(2+).

The protein belongs to the endoribonuclease YbeY family. The cofactor is Zn(2+).

Its subcellular location is the cytoplasm. Its function is as follows. Single strand-specific metallo-endoribonuclease involved in late-stage 70S ribosome quality control and in maturation of the 3' terminus of the 16S rRNA. The protein is Endoribonuclease YbeY of Cronobacter sakazakii (strain ATCC BAA-894) (Enterobacter sakazakii).